Reading from the N-terminus, the 261-residue chain is MVVLSVPAEVTVILLDIEGTTTPIAFVKDILFPYVKENVEEYLQAHWEEEECQQDVRLLRKQAEEDSHLDGAVPIPAASGNGADDPQWMIQAVVDNVYWQMSLDRKTTALKQLQGHMWRAAFKAGHMKAEFFEDVVPAVRKWREAGMKVYVYSSGSVEAQKLLFGHSTEGDILELVDGHFDTKIGHKVESESYQKIASSIGCSTNNILFLTDVSREASAAEEAGVHVAVVVRPGNAGLTDDEKTHFSLITSFSELYLPSST.

Mg(2+)-binding residues include D16 and E18. Residues 153 to 154 (SS) and K187 each bind substrate. Residue D212 coordinates Mg(2+).

Belongs to the HAD-like hydrolase superfamily. MasA/MtnC family. As to quaternary structure, monomer. Requires Mg(2+) as cofactor.

Its subcellular location is the cytoplasm. It is found in the nucleus. The enzyme catalyses 5-methylsulfanyl-2,3-dioxopentyl phosphate + H2O = 1,2-dihydroxy-5-(methylsulfanyl)pent-1-en-3-one + phosphate. It participates in amino-acid biosynthesis; L-methionine biosynthesis via salvage pathway; L-methionine from S-methyl-5-thio-alpha-D-ribose 1-phosphate: step 3/6. It functions in the pathway amino-acid biosynthesis; L-methionine biosynthesis via salvage pathway; L-methionine from S-methyl-5-thio-alpha-D-ribose 1-phosphate: step 4/6. Bifunctional enzyme that catalyzes the enolization of 2,3-diketo-5-methylthiopentyl-1-phosphate (DK-MTP-1-P) into the intermediate 2-hydroxy-3-keto-5-methylthiopentenyl-1-phosphate (HK-MTPenyl-1-P), which is then dephosphorylated to form the acireductone 1,2-dihydroxy-3-keto-5-methylthiopentene (DHK-MTPene). This Bos taurus (Bovine) protein is Enolase-phosphatase E1.